The following is a 108-amino-acid chain: ATP synthase epsilon chain (108 aa).

It belongs to the ATPase epsilon chain family. As to quaternary structure, F-type ATPases have 2 components, CF(1) - the catalytic core - and CF(0) - the membrane proton channel. CF(1) has five subunits: alpha(3), beta(3), gamma(1), delta(1), epsilon(1). CF(0) has three main subunits: a, b and c.

It localises to the cell inner membrane. In terms of biological role, produces ATP from ADP in the presence of a proton gradient across the membrane. The chain is ATP synthase epsilon chain from Rickettsia bellii (strain OSU 85-389).